Here is a 400-residue protein sequence, read N- to C-terminus: Na(+)/H(+) antiporter NhaA (400 aa).

12 helical membrane-spanning segments follow: residues 26–46 (AGGILLLFSAVVAMLLANSPL), 71–91 (LIHWINDGFMAVFFVLVGMEV), 107–127 (IFPAIAAIGGMVIPAVVYWFI), 137–157 (GWAIPMATDIAFALGIMALLS), 166–186 (IFLLALAIIDDLGAIVVIALF), 189–209 (HGLSVQALIFSAVAIIALILL), 212–232 (FKVSALCAYMVVGAILWASVL), 233–253 (KSGVHATLAGVIIGFSIPLKG), 273–293 (FVILPLFAFANAGVSFAGIDV), 299–319 (PLLLAIASGLIIGKPVGIFGF), 340–360 (IFAVAVLCGIGFTMSMFLASL), and 373–393 (LSRLGILLGSTVSAILGYLFL).

The protein belongs to the NhaA Na(+)/H(+) (TC 2.A.33) antiporter family.

It localises to the cell inner membrane. The catalysed reaction is Na(+)(in) + 2 H(+)(out) = Na(+)(out) + 2 H(+)(in). Its function is as follows. Na(+)/H(+) antiporter that extrudes sodium in exchange for external protons. The protein is Na(+)/H(+) antiporter NhaA of Haemophilus influenzae (strain PittGG).